Consider the following 337-residue polypeptide: Membrane-spanning 4-domains subfamily A member 18 (337 aa).

The segment at 101–121 (LGTTDLQTQPGGPQNPPTCAP) is disordered. Transmembrane regions (helical) follow at residues 155-175 (LGAI…NPSL), 183-203 (AISG…SLSV), 220-240 (MNVV…VDLI), and 252-272 (GGLL…SHFG).

The protein belongs to the MS4A family.

It is found in the membrane. The protein is Membrane-spanning 4-domains subfamily A member 18 (MS4A18) of Bos taurus (Bovine).